The chain runs to 447 residues: Ribulose bisphosphate carboxylase large chain (447 aa).

Residues N89 and T139 each contribute to the substrate site. The active-site Proton acceptor is K141. K143 contributes to the substrate binding site. The Mg(2+) site is built by K167, D169, and E170. The residue at position 167 (K167) is an N6-carboxylysine. H260 (proton acceptor) is an active-site residue. Positions 261, 293, and 345 each coordinate substrate.

This sequence belongs to the RuBisCO large chain family. Type I subfamily. Heterohexadecamer of 8 large chains and 8 small chains; disulfide-linked. The disulfide link is formed within the large subunit homodimers. It depends on Mg(2+) as a cofactor. The disulfide bond which can form in the large chain dimeric partners within the hexadecamer appears to be associated with oxidative stress and protein turnover.

It is found in the plastid. The protein resides in the chloroplast. It carries out the reaction 2 (2R)-3-phosphoglycerate + 2 H(+) = D-ribulose 1,5-bisphosphate + CO2 + H2O. The catalysed reaction is D-ribulose 1,5-bisphosphate + O2 = 2-phosphoglycolate + (2R)-3-phosphoglycerate + 2 H(+). Functionally, ruBisCO catalyzes two reactions: the carboxylation of D-ribulose 1,5-bisphosphate, the primary event in carbon dioxide fixation, as well as the oxidative fragmentation of the pentose substrate in the photorespiration process. Both reactions occur simultaneously and in competition at the same active site. The protein is Ribulose bisphosphate carboxylase large chain of Convolvulus tricolor (Dwarf morning glory).